Consider the following 254-residue polypeptide: Fructose-1,6-bisphosphatase (254 aa).

Residues Glu68, Asp84, Leu86, and Asp87 each contribute to the Mg(2+) site. Substrate-binding positions include Asp87–Ser89, Arg171, Ile176, and Arg195. Mg(2+) is bound at residue Asp202.

It belongs to the inositol monophosphatase superfamily. FBPase class 4 family. Homodimer. Mg(2+) is required as a cofactor.

It carries out the reaction beta-D-fructose 1,6-bisphosphate + H2O = beta-D-fructose 6-phosphate + phosphate. With respect to regulation, inhibited by Li(+), ADP, ATP and glucose-6-phosphate. Catalyzes the conversion of D-fructose 1,6-bisphosphate to D-fructose 6-phosphate. In vitro, also has weak activity with inositol-1-phosphate, glucose-1-phosphate and glycerol-2-phosphate. This chain is Fructose-1,6-bisphosphatase, found in Pyrococcus furiosus (strain ATCC 43587 / DSM 3638 / JCM 8422 / Vc1).